The chain runs to 1446 residues: Toll-like receptor 7 (1446 aa).

A signal peptide spans 1-16 (MAAILLLLLGFSWSLA). At 17–1049 (VESALAPKES…QHGIPESYIP (1033 aa)) the chain is on the extracellular side. LRR repeat units lie at residues 133–156 (LQTLEALRLDSCKLLQLPNNAFEG), 158–180 (ATLKSLRLSTHNSEWGPTRTLEL), 188–211 (LKQLTDLDLGDNNLRQLPSGFLCP), 213–235 (GNLQVLNLTRNRIRTAEQMGFAD), 246–270 (GSELQVLDASHNELRSISESWGISR), 271–294 (LRRLQHLNLAYNNLSELSGEALAG), 295–318 (LASLRIVNLSNNHLETLPEGLFAG), 320–342 (KELREIHLQQNELYELPKGLFHR), 344–368 (EQLLVVDLSGNQLTSNHVDNTTFAG), 369–392 (LIRLIVLNLAHNALTRIDYRTFKE), 393–416 (LYFLQILNLRNNSIGHIEDNAFLP), 417–440 (LYNLHTLNLAENRLHTLDDKLFNG), 442–464 (YVLSKLTLNNNLISVVEPAVFKN), 465–488 (CSDLKELDLSSNQLNEVPRALQDL), 489–511 (AMLRTLDLGENQIRTFDNQSFKN), 513–535 (HQLTGLRLIDNQIGNITVGMFQD), 536–559 (LPRLSVLNLAKNRIQSIERGSFDK), 561–582 (FELEAIRLDRNFLADINGVFAT), 584–605 (VSLLWLNLSENHLVWFDYAFIP), 606–629 (SNLKWLDIHGNYIEALGNYYKLQE), 631–652 (IRVKTLDASHNRITEIGPMSIP), 653–675 (NTIELLFINNNLIGNVQPNAFVD), and 677–699 (ANLARVDLYANQLSKLQLQQLRV). One can recognise an LRRCT domain in the interval 716 to 773 (NPFECDCTMDWLQRINNLTTRQHPRVMDMANIECVMPHARGAAVRPLSGLRPQDFLCR). Intrachain disulfides connect cysteine 722–cysteine 772, cysteine 796–cysteine 802, and cysteine 800–cysteine 815. LRR repeat units follow at residues 828–851 (PMDSSVVYLDGNNFPVLKNHAFIG), 852–875 (RKNLRALYVNGSQVAAIQNRTFAS), 876–899 (LASLQLLHLADNKLRTLHGYEFEQ), 900–923 (LSALRELYLQNNQLTTIENATLAP), 925–947 (AALELIRIDGNRLVTLPIWQMHA), and 951–979 (GTRLKSISLGRNQWSCRCQFLQALTSYVA). Cysteine 966 and cysteine 993 are disulfide-bonded. A helical transmembrane segment spans residues 1050-1070 (LLAAALALLFLLVVIAMVFAF). Topologically, residues 1071–1446 (RESLRIWLFA…QGPHVQAYLV (376 aa)) are cytoplasmic. The TIR domain occupies 1096–1233 (KLYDAVLLHS…HFWEKLRYAL (138 aa)). Disordered stretches follow at residues 1301 to 1332 (QNYSTATTATPSPRPQRRGEQPGSGSGGNHHL) and 1388 to 1446 (RPKR…AYLV). The span at 1395 to 1413 (HLQQAQAGTLGSKASQAAH) shows a compositional bias: polar residues. The segment covering 1414–1426 (QQQQQQQQQQQQQ) has biased composition (low complexity). A compositionally biased stretch (polar residues) spans 1427–1439 (PNPTAVSGQQQGP).

This sequence belongs to the Toll-like receptor family. In terms of tissue distribution, expressed in the fan-shaped body and the ellipsoid body, which are components of the locomotion center in the CNS (at protein level).

It localises to the cell membrane. In terms of biological role, toll-related receptor which binds to the neurotrophins NT1 and spz5. Essential for antiviral autophagy, it detects and binds to the vesicular stomatitis virus (vsv) following infection. This role is likely to be independent of the canonical Toll, immune deficiency, and JAK-STAT signaling pathways. Functions in olfactory circuit assembly by promoting synaptic partner matching between olfactory receptor neurons (ORN) axons and projection neurons (PN) dendrites partners in the antennal lobe. Function in the Va1d ORNs is necessary and sufficient for correct targeting to their partner PN dendrites. Also involved in the targeting of other classes of ORN axons. Functions with Toll-6 to regulate motor axon targeting and neuronal survival in the central nervous system (CNS). May be an upstream component of the NF-kappa-B (rel) regulatory cascade. The chain is Toll-like receptor 7 from Drosophila melanogaster (Fruit fly).